The following is a 361-amino-acid chain: Molybdopterin synthase catalytic subunit (361 aa).

Residues 101–102 (HR), Lys117, and 124–126 (KKE) contribute to the substrate site.

This sequence belongs to the MoaE family. MOCS2B subfamily. In terms of assembly, heterotetramer; composed of 2 small (Mocs2A) and 2 large (Mocs2B) subunits.

It localises to the cytoplasm. The enzyme catalyses 2 [molybdopterin-synthase sulfur-carrier protein]-C-terminal-Gly-aminoethanethioate + cyclic pyranopterin phosphate + H2O = molybdopterin + 2 [molybdopterin-synthase sulfur-carrier protein]-C-terminal Gly-Gly + 2 H(+). It participates in cofactor biosynthesis; molybdopterin biosynthesis. Its function is as follows. Catalytic subunit of the molybdopterin synthase complex, a complex that catalyzes the conversion of precursor Z into molybdopterin. Acts by mediating the incorporation of 2 sulfur atoms from thiocarboxylated Mocs2A into precursor Z to generate a dithiolene group. This chain is Molybdopterin synthase catalytic subunit, found in Drosophila pseudoobscura pseudoobscura (Fruit fly).